Here is a 465-residue protein sequence, read N- to C-terminus: Methylenetetrahydrofolate--tRNA-(uracil-5-)-methyltransferase TrmFO (465 aa).

3-8 contacts FAD; sequence GAGLAG.

This sequence belongs to the MnmG family. TrmFO subfamily. It depends on FAD as a cofactor.

It is found in the cytoplasm. It catalyses the reaction uridine(54) in tRNA + (6R)-5,10-methylene-5,6,7,8-tetrahydrofolate + NADH + H(+) = 5-methyluridine(54) in tRNA + (6S)-5,6,7,8-tetrahydrofolate + NAD(+). It carries out the reaction uridine(54) in tRNA + (6R)-5,10-methylene-5,6,7,8-tetrahydrofolate + NADPH + H(+) = 5-methyluridine(54) in tRNA + (6S)-5,6,7,8-tetrahydrofolate + NADP(+). Catalyzes the folate-dependent formation of 5-methyl-uridine at position 54 (M-5-U54) in all tRNAs. The polypeptide is Methylenetetrahydrofolate--tRNA-(uracil-5-)-methyltransferase TrmFO (Bradyrhizobium sp. (strain ORS 278)).